Reading from the N-terminus, the 209-residue chain is Large ribosomal subunit protein uL3 (209 aa).

The interval 127 to 151 (SGGPSSHGSKFHRHLGGTGQATTPA) is disordered.

The protein belongs to the universal ribosomal protein uL3 family. Part of the 50S ribosomal subunit. Forms a cluster with proteins L14 and L19.

In terms of biological role, one of the primary rRNA binding proteins, it binds directly near the 3'-end of the 23S rRNA, where it nucleates assembly of the 50S subunit. In Borrelia duttonii (strain Ly), this protein is Large ribosomal subunit protein uL3.